Here is a 484-residue protein sequence, read N- to C-terminus: Glutamate--tRNA ligase (484 aa).

The 'HIGH' region signature appears at 12 to 22 (PSPTGEPHVGT). The 'KMSKS' region signature appears at 253-257 (KLSKR). An ATP-binding site is contributed by lysine 256.

It belongs to the class-I aminoacyl-tRNA synthetase family. Glutamate--tRNA ligase type 1 subfamily. Monomer.

It localises to the cytoplasm. It catalyses the reaction tRNA(Glu) + L-glutamate + ATP = L-glutamyl-tRNA(Glu) + AMP + diphosphate. In terms of biological role, catalyzes the attachment of glutamate to tRNA(Glu) in a two-step reaction: glutamate is first activated by ATP to form Glu-AMP and then transferred to the acceptor end of tRNA(Glu). This chain is Glutamate--tRNA ligase, found in Rhizobium etli (strain CIAT 652).